Here is a 218-residue protein sequence, read N- to C-terminus: RQNRHEASCRIVSPPVCGNELLEKGEECDCGSPRNCRDPCCDAATCKLHSWVECESGECCDQCRFIKAGNVCRPQRSECDIAESCTGQSAQCPTDDFHKNGQPCLSNYGYCYNGNCPIMHHQCYALFGSGAIVAQDGCFKFNDRGDKFFYCRKENVIITPCAQEDVKCGRLFCHTKKSECDFDYSEDPDYGMVDHGTKCADGKVCNSNRQCVDVTTAY.

The region spanning 14-100 (PPVCGNELLE…QCPTDDFHKN (87 aa)) is the Disintegrin domain. Ca(2+)-binding residues include Val16, Leu21, Glu23, Glu26, and Asp29. Disulfide bonds link Cys28–Cys46, Cys30–Cys41, Cys40–Cys63, Cys54–Cys60, Cys59–Cys85, Cys72–Cys92, Cys79–Cys111, Cys104–Cys116, Cys123–Cys173, and Cys151–Cys161. The short motif at 78 to 80 (ECD) is the D/ECD-tripeptide element.

Belongs to the venom metalloproteinase (M12B) family. P-III subfamily. P-IIIa sub-subfamily. Monomer. Zn(2+) serves as cofactor. Glycosylated. As to expression, expressed by the venom gland.

The protein resides in the secreted. Functionally, the hemorrhagic metalloproteinase-disintegrin-like bothrojarin-1 is a potent inhibitor of collagen-induced platelet aggregation by blockage of alpha-2/beta-1 (ITGA2/ITGB1) integrin. It does not present any fibrinogen-clotting activity. In Bothrops jararaca (Jararaca), this protein is Zinc metalloproteinase-disintegrin-like bothrojarin-2.